The sequence spans 348 residues: NADH-ubiquinone oxidoreductase chain 2 (348 aa).

The next 10 helical transmembrane spans lie at 2–22 (SPYV…LTLF), 26–46 (WLMA…MMTY), 55–75 (AAIK…FAII), 96–116 (VLMT…FWVP), 149–169 (LNMK…GWGG), 178–198 (ILAY…MINP), 199–219 (SLAL…FLML), 242–262 (TAIL…GFMP), 276–296 (IIMA…YMRI), and 323–343 (INII…TPLL).

Belongs to the complex I subunit 2 family. In terms of assembly, core subunit of respiratory chain NADH dehydrogenase (Complex I) which is composed of 45 different subunits. Interacts with TMEM242.

It localises to the mitochondrion inner membrane. The enzyme catalyses a ubiquinone + NADH + 5 H(+)(in) = a ubiquinol + NAD(+) + 4 H(+)(out). Its function is as follows. Core subunit of the mitochondrial membrane respiratory chain NADH dehydrogenase (Complex I) that is believed to belong to the minimal assembly required for catalysis. Complex I functions in the transfer of electrons from NADH to the respiratory chain. The immediate electron acceptor for the enzyme is believed to be ubiquinone. In Osphranter robustus (Wallaroo), this protein is NADH-ubiquinone oxidoreductase chain 2.